The chain runs to 819 residues: DNA mismatch repair protein MutS (819 aa).

596–603 (GPNMSGKS) lines the ATP pocket.

The protein belongs to the DNA mismatch repair MutS family.

In terms of biological role, this protein is involved in the repair of mismatches in DNA. It is possible that it carries out the mismatch recognition step. This protein has a weak ATPase activity. The protein is DNA mismatch repair protein MutS of Thermosipho melanesiensis (strain DSM 12029 / CIP 104789 / BI429).